A 1717-amino-acid polypeptide reads, in one-letter code: PH domain leucine-rich repeat-containing protein phosphatase 1 (1717 aa).

Position 1 is an N-acetylmethionine (M1). Disordered regions lie at residues 1-25, 41-118, 136-156, and 252-470; these read MEPA…SAPA, LAAA…GANS, AASS…GAAG, and PGAA…PPPT. The segment covering 98 to 110 has biased composition (low complexity); sequence APQPIAGGAAPVP. Residues 262–274 show a composition bias toward pro residues; sequence EPPPEAGPRLAPP. Composition is skewed to low complexity over residues 313–325 and 333–345; these read SRRA…DSSP and PVSS…PVVS. S317 bears the Phosphoserine mark. Composition is skewed to polar residues over residues 346-358 and 408-417; these read DTES…SAES and QTASSPQPQQ. Residue S412 is modified to Phosphoserine. The PH domain maps to 536-636; the sequence is RIQLSGMYNV…WLRQVSKVAS (101 aa). LRR repeat units follow at residues 638-659, 661-682, 692-712, 715-736, 738-760, 761-783, 784-804, 808-831, 832-853, 873-894, 895-916, 918-939, 941-962, 963-984, 987-1008, 1013-1033, 1037-1058, 1061-1082, 1084-1105, 1106-1127, and 1129-1150; these read RISS…LFYS, DLTH…PAAR, KLKS…AVCS, TLAE…VGVM, NLQT…ENMK, QLSY…EKLT, AVDK…QALR, HIKH…DFLQ, HVTQ…IFNN, FLKA…PVPN, YLSY…VCES, KLEV…LFCN, SLRK…LERT, SVEV…LLMK, SLRF…TLSE, ILQE…PLLT, HLKI…KMAK, ELEE…IMNC, RMHT…MQLP, EIKC…ENLP, and KLQE…TLEL. The interval 1076 to 1205 is interaction with NHERF1; that stretch reads PTTIMNCRRM…NNFCDNREAL (130 aa). Residues 1175-1422 enclose the PPM-type phosphatase domain; the sequence is SHGYTEASGV…DSISAVVVQL (248 aa). Positions 1210, 1211, 1374, and 1413 each coordinate Mn(2+). Disordered stretches follow at residues 1458–1510 and 1673–1717; these read DRPS…SPAY and EVKE…DTPL. Over residues 1468–1489 the composition is skewed to low complexity; it reads SSSSGMASEISSELSTSEMSSE. The PDZ-binding; required for interaction with NHERF1 signature appears at 1715 to 1717; sequence TPL.

As to quaternary structure, interacts with the nucleotide free form of K-Ras (KRAS) via its LRR repeats. Interacts with AKT2, AKT3, PRKCB isoform beta-II, STK4, RPS6KB1, RAF1. Isoform 1 (predominantly) and isoform 2 interact with BRAP. Interacts with FKBP5; FKBP5 acts as a scaffold for PHLPP1 and Akt. Interacts with SCRIB; SCRIB acts as a scaffold for PHLPP1 and Akt. Interacts with NHERF1; NHERF1 scaffolds a heterotrimeric complex with PTEN at the plasma membrane. Interacts with WDR48 and USP12. The cofactor is Mn(2+). In terms of tissue distribution, in colorectal cancer tissue, expression is highest in the surface epithelium of normal colonic mucosa adjacent to the cancer tissue but is largely excluded from the crypt bases. Expression is lost or significantly decreased in 78% of tested tumors (at protein level). Ubiquitously expressed in non-cancerous tissues.

It localises to the cytoplasm. It is found in the membrane. Its subcellular location is the nucleus. The protein localises to the cell membrane. The enzyme catalyses O-phospho-L-seryl-[protein] + H2O = L-seryl-[protein] + phosphate. It catalyses the reaction O-phospho-L-threonyl-[protein] + H2O = L-threonyl-[protein] + phosphate. Its activity is regulated as follows. Insensitive to okadaic acid. Deubiquitination by WDR48-USP12 complex positively regulates PHLPP1 stability. In terms of biological role, protein phosphatase involved in regulation of Akt and PKC signaling. Mediates dephosphorylation in the C-terminal domain hydrophobic motif of members of the AGC Ser/Thr protein kinase family; specifically acts on 'Ser-473' of AKT2 and AKT3, 'Ser-660' of PRKCB and 'Ser-657' of PRKCA. Isoform 2 seems to have a major role in regulating Akt signaling in hippocampal neurons. Akt regulates the balance between cell survival and apoptosis through a cascade that primarily alters the function of transcription factors that regulate pro- and antiapoptotic genes. Dephosphorylation of 'Ser-473' of Akt triggers apoptosis and suppression of tumor growth. Dephosphorylation of PRKCA and PRKCB leads to their destabilization and degradation. Dephosphorylates STK4 on 'Thr-387' leading to STK4 activation and apoptosis. Dephosphorylates RPS6KB1 and is involved in regulation of cap-dependent translation. Inhibits cancer cell proliferation and may act as a tumor suppressor. Dephosphorylates RAF1 inhibiting its kinase activity. May act as a negative regulator of K-Ras signaling in membrane rafts. Involved in the hippocampus-dependent long-term memory formation. Involved in circadian control by regulating the consolidation of circadian periodicity after resetting. Involved in development and function of regulatory T-cells. This is PH domain leucine-rich repeat-containing protein phosphatase 1 (PHLPP1) from Homo sapiens (Human).